A 518-amino-acid polypeptide reads, in one-letter code: MLLRRVLGYGVVGAGLASAGWSLHTNDYDPNSLGIVRLSRSAAAVVDVALTYKRELYYKEWDKETPEYKAEKSRVHKIAAEKLLQLICINKGVYIKVGQHIGALEYLLPKEFVQTMKVLHSDAPQNPIEDLYKVIRQDLHCNPEEIFDSFEREPLGTASLAQVHKARLKTGELVAVKVQHPYVKGNSRVDMKTMELAVNVLARIFPDFKIHWLVEESKKNLPIELDFLNEGRNAEKVAKQFKKYSWLRVPKIYWKYSSSRVLVMEYLEGGHVTDLDYIRRNKIDSFAVANRIGQLYSEMIFRTGFVHSDPHPGNILVRRTPENSLEIVLLDHGLYANLTDKFRYDYSNLWLSILKVDRKAMRQHSEQLGIKGDLYGLFACMVTGRPWETVMQGLTKVKYSKEEKNTLQNNTSLVLPHISDVLEQVDRQMLLILKTNDLIRGIESTLRTQNRMTAFWVMSKCCVQSSYAEQRAKQSDSGSSRILWLRVRERWELFKLNCYYLYLGLINFGFLEALKQVI.

The 320-residue stretch at 149-468 folds into the Protein kinase domain; the sequence is SFEREPLGTA…SKCCVQSSYA (320 aa). ATP-binding positions include 155-163 and lysine 177; that span reads LGTASLAQV. Aspartate 309 functions as the Proton acceptor in the catalytic mechanism.

The protein belongs to the protein kinase superfamily. ADCK protein kinase family.

It localises to the mitochondrion. Its function is as follows. Essential for maintaining mitochondrial cristae formation and mitochondrial function by acting via YME1L to regulate the mitochondrial structural proteins Opa1 and Mitofilin. This function is likely to be kinase-independent. Functions in tracheal development and larval molting probably by acting in sterol modification and/or intracellular lipid trafficking. The action of this enzyme is not yet clear. It is not known if it has protein kinase activity and what type of substrate it would phosphorylate (Ser, Thr or Tyr). The protein is AarF domain-containing kinase 1 of Drosophila melanogaster (Fruit fly).